The primary structure comprises 352 residues: tRNA-specific 2-thiouridylase MnmA (352 aa).

Residues 6–13 (AMSGGVDS) and Leu-32 each bind ATP. Residue Cys-101 is the Nucleophile of the active site. Cys-101 and Cys-194 are joined by a disulfide. ATP is bound at residue Gly-125. Positions 144–146 (KDQ) are interaction with tRNA. The active-site Cysteine persulfide intermediate is the Cys-194.

It belongs to the MnmA/TRMU family.

It localises to the cytoplasm. It carries out the reaction S-sulfanyl-L-cysteinyl-[protein] + uridine(34) in tRNA + AH2 + ATP = 2-thiouridine(34) in tRNA + L-cysteinyl-[protein] + A + AMP + diphosphate + H(+). Its function is as follows. Catalyzes the 2-thiolation of uridine at the wobble position (U34) of tRNA, leading to the formation of s(2)U34. This Frankia casuarinae (strain DSM 45818 / CECT 9043 / HFP020203 / CcI3) protein is tRNA-specific 2-thiouridylase MnmA.